The sequence spans 220 residues: Endonuclease NucS (220 aa).

Belongs to the NucS endonuclease family.

The protein localises to the cytoplasm. Functionally, cleaves both 3' and 5' ssDNA extremities of branched DNA structures. In Mycobacterium leprae (strain TN), this protein is Endonuclease NucS.